The following is a 428-amino-acid chain: 4-hydroxy-3-methylbut-2-en-1-yl diphosphate synthase (flavodoxin) (428 aa).

[4Fe-4S] cluster contacts are provided by Cys300, Cys303, Cys346, and Glu353.

Belongs to the IspG family. The cofactor is [4Fe-4S] cluster.

It catalyses the reaction (2E)-4-hydroxy-3-methylbut-2-enyl diphosphate + oxidized [flavodoxin] + H2O + 2 H(+) = 2-C-methyl-D-erythritol 2,4-cyclic diphosphate + reduced [flavodoxin]. Its pathway is isoprenoid biosynthesis; isopentenyl diphosphate biosynthesis via DXP pathway; isopentenyl diphosphate from 1-deoxy-D-xylulose 5-phosphate: step 5/6. Converts 2C-methyl-D-erythritol 2,4-cyclodiphosphate (ME-2,4cPP) into 1-hydroxy-2-methyl-2-(E)-butenyl 4-diphosphate. The chain is 4-hydroxy-3-methylbut-2-en-1-yl diphosphate synthase (flavodoxin) from Methylobacillus flagellatus (strain ATCC 51484 / DSM 6875 / VKM B-1610 / KT).